A 185-amino-acid polypeptide reads, in one-letter code: MSKDDSIKKTVTIGLSAAIFFVLSCFASIPVGFNVSIETSVAFLAFIAVAFGPAVGFYVGLIGNTIKDFILFGNVSWNWVLCSALIGFIYGLPHKIIDLKYQVFTKKKIVYFWLYQVAFNFIIWGFFAPQSDLLIYGQPPKLVYLQSFLIVISNILAYSVVGIKLMSMYSCHYNKQATLIKINNS.

Transmembrane regions (helical) follow at residues 13-33, 42-62, 69-89, 109-129, and 143-163; these read IGLS…PVGF, AFLA…VGLI, FILF…IGFI, IVYF…FFAP, and VYLQ…VVGI.

This sequence belongs to the UPF0397 family.

Its subcellular location is the cell membrane. This is UPF0397 protein PAM_019 from Onion yellows phytoplasma (strain OY-M).